The primary structure comprises 387 residues: Putative purine permease 15 (387 aa).

The next 10 membrane-spanning stretches (helical) occupy residues 44–64, 84–104, 122–142, 150–169, 179–199, 210–230, 252–272, 306–326, 329–349, and 354–374; these read WVTIIICTILAVTGQCIARLL, TLLQVVGFPILLLPFLLHFLI, LAITYSILCIYMFCQAFFSDV, VFTLTYTTQLLFTLIFSKYY, FISLILAVLAGAFTLYTFSAG, YGIINVAFGAAIFFSLLLCII, FVVVLEMIIFLSLVVTIILVA, VAWQIYWVGIVGLVFAVSAVF, VISVCTWPIVSLLVAFLYNTH, and VFRGIALGAAALSVSCYIYII.

Belongs to the purine permeases (TC 2.A.7.14) family.

The protein resides in the membrane. The polypeptide is Putative purine permease 15 (PUP15) (Arabidopsis thaliana (Mouse-ear cress)).